The following is a 750-amino-acid chain: ABC transporter D family member 3 (750 aa).

The span at 1-14 shows a compositional bias: polar residues; the sequence is MKKNNVNNITETLN. Residues 1-32 form a disordered region; it reads MKKNNVNNITETLNSSSSSSSSSGSSSDEEVK. The segment covering 15–26 has biased composition (low complexity); it reads SSSSSSSSSGSS. Transmembrane regions (helical) follow at residues 63 to 83, 123 to 143, 188 to 208, and 215 to 235; these read IVIILYEKPVIPLLLFLLLFG, FAIGGSALFDAIIKFIVSIMA, FTTLLSSIVSQCITGPMVVVY, and TTIDWYAPLIVYGYFFLGYFI. Residues 74–362 enclose the ABC transmembrane type-1 domain; the sequence is PLLLFLLLFG…EQAKQQFEAL (289 aa). Positions 334–370 form a coiled coil; the sequence is ALLKRSNKNIKNEELLVEEEQAKQQFEALLKNKKRVI. A helical transmembrane segment spans residues 382–402; the sequence is MFTFFSPLINYFIISIPVFFL. Positions 507–737 constitute an ABC transporter domain; the sequence is ITLDDVTYFT…SNNINTINID (231 aa). An ATP-binding site is contributed by 540 to 547; it reads GPSGSGKS.

The protein belongs to the ABC transporter superfamily. ABCD family. Peroxisomal fatty acyl CoA transporter (TC 3.A.1.203) subfamily.

The protein resides in the membrane. This Dictyostelium discoideum (Social amoeba) protein is ABC transporter D family member 3 (abcD3).